Here is an 81-residue protein sequence, read N- to C-terminus: Probable antimicrobial peptide Con13 (81 aa).

Residues 1–22 (MNRKLLLVFLVVAMLVMQPAEA) form the signal peptide. Residues 66–81 (EAGQIPFDEFMDVLYS) constitute a propeptide that is removed on maturation.

It belongs to the non-disulfide-bridged peptide (NDBP) superfamily. Long chain multifunctional peptide (group 2) family. Expressed by the venom gland.

The protein localises to the secreted. Its subcellular location is the target cell membrane. Functionally, at high concentrations, acts as a pore former in cellular membranes and causes the leakage of the cells. At submicromolar concentrations, degranulates granulocytes and has a weak hemolytic activity against human erythrocytes. Also strongly inhibits the production of superoxide anions. Has a strong antibacterial activity against Gram-negative bacteria but is less active against Gram-positive bacteria. Also has antifungal activity. The polypeptide is Probable antimicrobial peptide Con13 (Opisthacanthus cayaporum (South American scorpion)).